The chain runs to 338 residues: Glycerol-1-phosphate dehydrogenase [NAD(P)+] (338 aa).

NAD(+) contacts are provided by residues 81-85 (GRPLD) and 103-106 (TSAS). Asp108 provides a ligand contact to substrate. Ser112 lines the NAD(+) pocket. Asp157 contributes to the substrate binding site. Zn(2+) is bound by residues Asp157 and His238. Residue His242 participates in substrate binding. Residue His256 participates in Zn(2+) binding.

It belongs to the glycerol-1-phosphate dehydrogenase family. In terms of assembly, homodimer. Zn(2+) is required as a cofactor.

The protein localises to the cytoplasm. The enzyme catalyses sn-glycerol 1-phosphate + NAD(+) = dihydroxyacetone phosphate + NADH + H(+). It carries out the reaction sn-glycerol 1-phosphate + NADP(+) = dihydroxyacetone phosphate + NADPH + H(+). It participates in membrane lipid metabolism; glycerophospholipid metabolism. In terms of biological role, catalyzes the NAD(P)H-dependent reduction of dihydroxyacetonephosphate (DHAP or glycerone phosphate) to glycerol 1-phosphate (G1P). The G1P thus generated is used as the glycerophosphate backbone of phospholipids in the cellular membranes of Archaea. The protein is Glycerol-1-phosphate dehydrogenase [NAD(P)+] of Pyrobaculum calidifontis (strain DSM 21063 / JCM 11548 / VA1).